The following is a 35-amino-acid chain: SDTTAGSYAEALAELLTIDPSLIVTTVDTQLAVAG.

The polypeptide is Water stress-responsive protein 7 (Pinus pinaster (Maritime pine)).